Here is a 299-residue protein sequence, read N- to C-terminus: Coenzyme PQQ synthesis protein B (299 aa).

The protein belongs to the PqqB family.

The protein operates within cofactor biosynthesis; pyrroloquinoline quinone biosynthesis. Its function is as follows. May be involved in the transport of PQQ or its precursor to the periplasm. The polypeptide is Coenzyme PQQ synthesis protein B (Xanthomonas campestris pv. campestris (strain 8004)).